The sequence spans 372 residues: Glutamate 5-kinase (372 aa).

Lys14 contributes to the ATP binding site. Substrate-binding residues include Ser54, Asp141, and Asn153. Residue 173 to 174 participates in ATP binding; sequence TD. The PUA domain occupies 280–358; it reads RGTLVLDDGA…DAIESLLGYS (79 aa).

It belongs to the glutamate 5-kinase family.

The protein localises to the cytoplasm. It carries out the reaction L-glutamate + ATP = L-glutamyl 5-phosphate + ADP. The protein operates within amino-acid biosynthesis; L-proline biosynthesis; L-glutamate 5-semialdehyde from L-glutamate: step 1/2. In terms of biological role, catalyzes the transfer of a phosphate group to glutamate to form L-glutamate 5-phosphate. This Pseudomonas entomophila (strain L48) protein is Glutamate 5-kinase.